Reading from the N-terminus, the 1171-residue chain is Zinc finger BED domain-containing protein 4 (1171 aa).

The interval 25-62 is disordered; that stretch reads EEEDDDGIPPDSLERMDFKSEQEDMKQTDSGGERAGLG. The segment covering 36–51 has biased composition (basic and acidic residues); sequence SLERMDFKSEQEDMKQ. Residue K43 forms a Glycyl lysine isopeptide (Lys-Gly) (interchain with G-Cter in SUMO2) linkage. BED-type zinc fingers lie at residues 115 to 172 and 285 to 342; these read RKKS…LIQE and RRRS…VLQE. 8 residues coordinate Zn(2+): C136, C139, H160, H165, C306, C309, H330, and H335. A compositionally biased stretch (low complexity) spans 362-385; that stretch reads LLPPEGELSSVSSSPVKPVRESPS. The segment at 362–405 is disordered; that stretch reads LLPPEGELSSVSSSPVKPVRESPSASSSPDRLTEDLQSHLNPGD. 2 BED-type zinc fingers span residues 456 to 512 and 558 to 615; these read RLKS…VGSQ and KKTS…LKTE. Residues C477 and C480 each coordinate Zn(2+). K489 participates in a covalent cross-link: Glycyl lysine isopeptide (Lys-Gly) (interchain with G-Cter in SUMO2). Residues H500, H505, C579, C582, H603, and H608 each contribute to the Zn(2+) site. A disordered region spans residues 614–640; sequence TEVSETARPSSPDTRVPRGTELSGASS. Residue S624 is modified to Phosphoserine. The tract at residues 1086–1171 is required for homodimerization and nuclear accumulation; sequence LAYLEEEVLE…VNLPLIYFQY (86 aa).

Homodimer; via C-terminus. Interacts with MYH9. Interacts with SAFB/SAFB1. As to expression, expressed in testis, heart, lung, and weakly expressed in brain, liver, muscle, placenta and small intestine. Expressed in the retina, found in the cone photoreceptors, Mueller cells, cone pedicles and in the innermost retinal layer.

The protein resides in the nucleus. It is found in the cytoplasm. The protein localises to the photoreceptor inner segment. Transcriptional regulator that binds to poly-guanine tracts in gene promoters and activates transcription. Able to bind single- and double-stranded DNA and RNA. This Homo sapiens (Human) protein is Zinc finger BED domain-containing protein 4 (ZBED4).